Here is a 608-residue protein sequence, read N- to C-terminus: ATP-citrate synthase beta chain protein 1 (608 aa).

Residues 214 to 234 (ILRF…ELGG) and 265 to 291 (FKSE…KNQA) each bind ATP. Glutamate 231 serves as a coordination point for Mg(2+). Residue histidine 273 is the Tele-phosphohistidine intermediate of the active site. 292–302 (LQDAGATVPTS) lines the CoA pocket.

Belongs to the succinate/malate CoA ligase alpha subunit family. In terms of assembly, heterooctamer of 4 alpha and 4 beta chains.

It is found in the cytoplasm. The protein resides in the cytosol. It catalyses the reaction oxaloacetate + acetyl-CoA + ADP + phosphate = citrate + ATP + CoA. Its function is as follows. ATP citrate-lyase is the primary enzyme responsible for the synthesis of cytosolic acetyl-CoA, used for the elongation of fatty acids and biosynthesis of isoprenoids, flavonoids and malonated derivatives. May supply substrate to the cytosolic acetyl-CoA carboxylase, which generates the malonyl-CoA used for the synthesis of a multitude of compounds, including very long chain fatty acids and flavonoids. Required for normal growth and development and elongation of C18 fatty acids to C20 to C24 fatty acids in seeds. In contrast to all known animal ACL enzymes having a homomeric structure, plant ACLs are composed of alpha and beta chains. The polypeptide is ATP-citrate synthase beta chain protein 1 (ACLB-1) (Arabidopsis thaliana (Mouse-ear cress)).